Reading from the N-terminus, the 421-residue chain is MSELLDSFETEFAKFYTDSNLEETNLQKCLDHTHEFKSQLKKLKAHLNKHIQESKPEVYNKLSDKEKQKFKRKRELIIEKLSKSQRQWDHSVKKQIKYVSQQSNRFNKSTLNKLKEFDIDSVYVNKLPKETMENVNEAIGYHILRYSIDNMPLGNKNEAFQYLKDVYGITNKESTEFIEMGQIVHDLKKGDTESCLKWCSNEMESLSSNHTALSSLKFDLYTLSAMQIVKHGNPVELYYQITQNAPLDCFRHREKELMQNVVPLLTKSLIGQPIEDIDSKVNKELKECTSLFIKEYCAAKHIFFDSPLFLIVLSGLISFQFFIKYKTIRELAHVDWTTKDELPFDVKLPDFLTHFHPIFICPVLKEETTTENPPYSLACHHIISKKALDRLSKNGTITFKCPYCPVNTSMSSTKKVRFVML.

The region spanning 176–236 (EFIEMGQIVH…QIVKHGNPVE (61 aa)) is the CTLH domain. An RING-Gid-type zinc finger spans residues 361-404 (CPVLKEETTTENPPYSLACHHIISKKALDRLSKNGTITFKCPYC).

It belongs to the RMD5/GID2 family. Identified in the GID/CTLH complex. In the absence of stress, the complex exists as an inactive anticipatory complex (GID(Ant)), composed of VID30/GID1, the E3 ubiquitin-ligase RMD5/GID2, VID28/GID5, GID8, and the RING-like subunit FYV10/GID9, awaiting a substrate receptor to form the active E3 ligase complex. When cells are shifted to glucose-containing medium, the substrate receptor VID24/GID4 is induced and becomes part of the complex, named GID(SR4). Additionally, GID7 transforms the GID(SR4) E3 ligase core into a higher-order supramolecular assembly (Chelator-GID(SR4)) specifically tailored for FBP1 ubiquitination. Under osmotic or heat stress, the substrate receptor GID10 is induced and becomes part of the complex, named GID(SR10). Within the GID complex, interacts directly with GID8, FYV10/GID9 and VID28/GID5.

It is found in the cytoplasm. The enzyme catalyses S-ubiquitinyl-[E2 ubiquitin-conjugating enzyme]-L-cysteine + [acceptor protein]-L-lysine = [E2 ubiquitin-conjugating enzyme]-L-cysteine + N(6)-ubiquitinyl-[acceptor protein]-L-lysine.. The protein operates within protein modification; protein ubiquitination. E3 ubiquitin-protein ligase component of the GID E3 ligase complex recruiting N termini and catalyzing ubiquitination of proteins targeted for degradation. GID E3 is regulated through assembly with interchangeable N-degron-binding substrate receptors induced by distinct environmental perturbations. Required for the adaptation to the presence of glucose in the growth medium; mediates in association with the substrate receptor VID24/GID4 the degradation of enzymes involved in gluconeogenesis when cells are shifted to glucose-containing medium. Required for proteasome-dependent catabolite degradation of fructose-1,6-bisphosphatase (FBP1), malate dehydrogenase (MDH2), and other gluconeogenic enzymes. This chain is E3 ubiquitin-protein ligase RMD5, found in Saccharomyces cerevisiae (strain ATCC 204508 / S288c) (Baker's yeast).